The following is a 383-amino-acid chain: Succinyl-diaminopimelate desuccinylase (383 aa).

His-73 contacts Zn(2+). Residue Asp-75 is part of the active site. Asp-107 lines the Zn(2+) pocket. The Proton acceptor role is filled by Glu-141. Zn(2+) contacts are provided by Glu-142, Glu-170, and His-356.

The protein belongs to the peptidase M20A family. DapE subfamily. As to quaternary structure, homodimer. The cofactor is Zn(2+). Co(2+) is required as a cofactor.

The catalysed reaction is N-succinyl-(2S,6S)-2,6-diaminopimelate + H2O = (2S,6S)-2,6-diaminopimelate + succinate. It functions in the pathway amino-acid biosynthesis; L-lysine biosynthesis via DAP pathway; LL-2,6-diaminopimelate from (S)-tetrahydrodipicolinate (succinylase route): step 3/3. In terms of biological role, catalyzes the hydrolysis of N-succinyl-L,L-diaminopimelic acid (SDAP), forming succinate and LL-2,6-diaminopimelate (DAP), an intermediate involved in the bacterial biosynthesis of lysine and meso-diaminopimelic acid, an essential component of bacterial cell walls. This chain is Succinyl-diaminopimelate desuccinylase, found in Pseudomonas aeruginosa (strain UCBPP-PA14).